The chain runs to 1128 residues: GTPase-activating protein BEM3 (1128 aa).

Residues 194–241 (SSPTKIHSEQLASPAASVTYTTSRITIKSPNKGSKSPLQERLRSPQNP) are disordered. The span at 209–230 (ASVTYTTSRITIKSPNKGSKSP) shows a compositional bias: polar residues. A Phosphoserine modification is found at Ser-254. Disordered stretches follow at residues 345–391 (EDLV…TPLS) and 418–486 (PVLT…RPHA). The span at 366-375 (LPPPPAPPTF) shows a compositional bias: pro residues. Polar residues-rich tracts occupy residues 382 to 391 (GNIKNSTPLS) and 420 to 478 (LTSS…QGSL). A PH domain is found at 634–741 (DNVKDGSLLL…WLSAFSDYID (108 aa)). Disordered stretches follow at residues 746 to 777 (LSLS…NATI) and 796 to 838 (NNNI…DSRR). The span at 752–764 (RNANDTDSASHLS) shows a compositional bias: polar residues. Over residues 796–815 (NNNISNSSNNIANSDGIDSN) the composition is skewed to low complexity. Over residues 816-829 (PSSHSNFLASSSGN) the composition is skewed to polar residues. The region spanning 913–1128 (LRLSSHKYQN…EKVDIHIPQV (216 aa)) is the Rho-GAP domain.

It is found in the cytoplasm. In terms of biological role, GTPase-activating protein (GAP) for CDC42 and less efficiently for RHO1. Negative regulator of the pheromone-response pathway through the STE20 protein kinase. The polypeptide is GTPase-activating protein BEM3 (BEM3) (Saccharomyces cerevisiae (strain ATCC 204508 / S288c) (Baker's yeast)).